We begin with the raw amino-acid sequence, 414 residues long: Sensor protein CutS (414 aa).

Positions 1–15 (MATTPAPPGAPPKPT) are enriched in pro residues. Positions 1 to 21 (MATTPAPPGAPPKPTWDPRSA) are disordered. 2 helical membrane-spanning segments follow: residues 37-57 (LLYGGMFLIAGILLLSIIYLL) and 121-141 (SLLALLGLAVIAFAFGYAMAG). The region spanning 142–194 (RVLSPLGRITRTARAVAGSDLSRRIELDGPDDELKELADTFDDMLERLQRAFT) is the HAMP domain. The region spanning 202–414 (NASHELRTPL…GLVMRVTLPV (213 aa)) is the Histidine kinase domain. A Phosphohistidine; by autocatalysis modification is found at histidine 205.

It localises to the cell membrane. The catalysed reaction is ATP + protein L-histidine = ADP + protein N-phospho-L-histidine.. In terms of biological role, member of the two-component regulatory system CutS/CutR, involved in the regulation of copper metabolism. This is Sensor protein CutS (cutS) from Streptomyces coelicolor (strain ATCC BAA-471 / A3(2) / M145).